Consider the following 171-residue polypeptide: 3-hydroxydecanoyl-[acyl-carrier-protein] dehydratase (171 aa).

His70 is an active-site residue.

Belongs to the thioester dehydratase family. FabA subfamily. Homodimer.

The protein resides in the cytoplasm. It catalyses the reaction a (3R)-hydroxyacyl-[ACP] = a (2E)-enoyl-[ACP] + H2O. It carries out the reaction (3R)-hydroxydecanoyl-[ACP] = (2E)-decenoyl-[ACP] + H2O. The catalysed reaction is (2E)-decenoyl-[ACP] = (3Z)-decenoyl-[ACP]. Its pathway is lipid metabolism; fatty acid biosynthesis. Necessary for the introduction of cis unsaturation into fatty acids. Catalyzes the dehydration of (3R)-3-hydroxydecanoyl-ACP to E-(2)-decenoyl-ACP and then its isomerization to Z-(3)-decenoyl-ACP. Can catalyze the dehydratase reaction for beta-hydroxyacyl-ACPs with saturated chain lengths up to 16:0, being most active on intermediate chain length. The sequence is that of 3-hydroxydecanoyl-[acyl-carrier-protein] dehydratase from Ectopseudomonas mendocina (strain ymp) (Pseudomonas mendocina).